A 338-amino-acid polypeptide reads, in one-letter code: Phosphate acyltransferase (338 aa).

It belongs to the PlsX family. As to quaternary structure, homodimer. Probably interacts with PlsY.

It localises to the cytoplasm. The catalysed reaction is a fatty acyl-[ACP] + phosphate = an acyl phosphate + holo-[ACP]. Its pathway is lipid metabolism; phospholipid metabolism. Functionally, catalyzes the reversible formation of acyl-phosphate (acyl-PO(4)) from acyl-[acyl-carrier-protein] (acyl-ACP). This enzyme utilizes acyl-ACP as fatty acyl donor, but not acyl-CoA. The chain is Phosphate acyltransferase from Salinibacter ruber (strain DSM 13855 / M31).